We begin with the raw amino-acid sequence, 207 residues long: MANVKLFDQTGKEVSSVELNDAIFGIEPNESVVFDVVISQRASLRQGTHAVKNRSAVSGGGRKPWRQKGTGRARQGSIRSPQWRGGGVVFGPTPRSYGYKLPQKVRRLALKSVYSAKVAEDKFVAVEGLSFAAPKTAEFAKVLSALSIDTKVLVLVEEGNEFAALSARNLPNVTVATAATASVLDIVNADKLLVTKEAISTIEEVLA.

Residues 49–78 (HAVKNRSAVSGGGRKPWRQKGTGRARQGSI) are disordered.

The protein belongs to the universal ribosomal protein uL4 family. As to quaternary structure, part of the 50S ribosomal subunit.

One of the primary rRNA binding proteins, this protein initially binds near the 5'-end of the 23S rRNA. It is important during the early stages of 50S assembly. It makes multiple contacts with different domains of the 23S rRNA in the assembled 50S subunit and ribosome. Its function is as follows. Forms part of the polypeptide exit tunnel. This Streptococcus pyogenes serotype M1 protein is Large ribosomal subunit protein uL4 (rplD).